Reading from the N-terminus, the 143-residue chain is UPF0225 protein Reut_A0143 (143 aa).

The protein belongs to the UPF0225 family.

The chain is UPF0225 protein Reut_A0143 from Cupriavidus pinatubonensis (strain JMP 134 / LMG 1197) (Cupriavidus necator (strain JMP 134)).